A 338-amino-acid polypeptide reads, in one-letter code: Ketol-acid reductoisomerase (NADP(+)) (338 aa).

One can recognise a KARI N-terminal Rossmann domain in the interval 3-183 (IELLYDADAD…GGARAGVIPT (181 aa)). NADP(+)-binding positions include 26 to 29 (YGSQ), Arg-49, Ser-52, Ser-54, and 84 to 87 (DTSQ). His-109 is an active-site residue. Position 135 (Gly-135) interacts with NADP(+). The KARI C-terminal knotted domain occupies 184–329 (TFEAETVTDL…AKLRDLMSWV (146 aa)). Residues Asp-192, Glu-196, Glu-228, and Glu-232 each contribute to the Mg(2+) site. Residue Ser-253 coordinates substrate.

Belongs to the ketol-acid reductoisomerase family. Mg(2+) serves as cofactor.

It catalyses the reaction (2R)-2,3-dihydroxy-3-methylbutanoate + NADP(+) = (2S)-2-acetolactate + NADPH + H(+). The enzyme catalyses (2R,3R)-2,3-dihydroxy-3-methylpentanoate + NADP(+) = (S)-2-ethyl-2-hydroxy-3-oxobutanoate + NADPH + H(+). The protein operates within amino-acid biosynthesis; L-isoleucine biosynthesis; L-isoleucine from 2-oxobutanoate: step 2/4. It participates in amino-acid biosynthesis; L-valine biosynthesis; L-valine from pyruvate: step 2/4. Functionally, involved in the biosynthesis of branched-chain amino acids (BCAA). Catalyzes an alkyl-migration followed by a ketol-acid reduction of (S)-2-acetolactate (S2AL) to yield (R)-2,3-dihydroxy-isovalerate. In the isomerase reaction, S2AL is rearranged via a Mg-dependent methyl migration to produce 3-hydroxy-3-methyl-2-ketobutyrate (HMKB). In the reductase reaction, this 2-ketoacid undergoes a metal-dependent reduction by NADPH to yield (R)-2,3-dihydroxy-isovalerate. The protein is Ketol-acid reductoisomerase (NADP(+)) of Corynebacterium glutamicum (strain ATCC 13032 / DSM 20300 / JCM 1318 / BCRC 11384 / CCUG 27702 / LMG 3730 / NBRC 12168 / NCIMB 10025 / NRRL B-2784 / 534).